A 251-amino-acid chain; its full sequence is Ubiquinone/menaquinone biosynthesis C-methyltransferase UbiE (251 aa).

Residues threonine 74, aspartate 95, 123–124, and serine 140 contribute to the S-adenosyl-L-methionine site; that span reads NA.

Belongs to the class I-like SAM-binding methyltransferase superfamily. MenG/UbiE family.

It carries out the reaction a 2-demethylmenaquinol + S-adenosyl-L-methionine = a menaquinol + S-adenosyl-L-homocysteine + H(+). The enzyme catalyses a 2-methoxy-6-(all-trans-polyprenyl)benzene-1,4-diol + S-adenosyl-L-methionine = a 5-methoxy-2-methyl-3-(all-trans-polyprenyl)benzene-1,4-diol + S-adenosyl-L-homocysteine + H(+). It functions in the pathway quinol/quinone metabolism; menaquinone biosynthesis; menaquinol from 1,4-dihydroxy-2-naphthoate: step 2/2. Its pathway is cofactor biosynthesis; ubiquinone biosynthesis. Its function is as follows. Methyltransferase required for the conversion of demethylmenaquinol (DMKH2) to menaquinol (MKH2) and the conversion of 2-polyprenyl-6-methoxy-1,4-benzoquinol (DDMQH2) to 2-polyprenyl-3-methyl-6-methoxy-1,4-benzoquinol (DMQH2). This is Ubiquinone/menaquinone biosynthesis C-methyltransferase UbiE from Escherichia coli O1:K1 / APEC.